Reading from the N-terminus, the 521-residue chain is Bifunctional purine biosynthesis protein PurH (521 aa).

The MGS-like domain maps to 1-145 (MIKQALISVS…KNHRDVTVVV (145 aa)).

It belongs to the PurH family.

The catalysed reaction is (6R)-10-formyltetrahydrofolate + 5-amino-1-(5-phospho-beta-D-ribosyl)imidazole-4-carboxamide = 5-formamido-1-(5-phospho-D-ribosyl)imidazole-4-carboxamide + (6S)-5,6,7,8-tetrahydrofolate. The enzyme catalyses IMP + H2O = 5-formamido-1-(5-phospho-D-ribosyl)imidazole-4-carboxamide. The protein operates within purine metabolism; IMP biosynthesis via de novo pathway; 5-formamido-1-(5-phospho-D-ribosyl)imidazole-4-carboxamide from 5-amino-1-(5-phospho-D-ribosyl)imidazole-4-carboxamide (10-formyl THF route): step 1/1. It functions in the pathway purine metabolism; IMP biosynthesis via de novo pathway; IMP from 5-formamido-1-(5-phospho-D-ribosyl)imidazole-4-carboxamide: step 1/1. The polypeptide is Bifunctional purine biosynthesis protein PurH (Burkholderia vietnamiensis (strain G4 / LMG 22486) (Burkholderia cepacia (strain R1808))).